Reading from the N-terminus, the 208-residue chain is FMN-dependent NADH:quinone oxidoreductase (208 aa).

FMN is bound by residues serine 9 and 15 to 17 (SHS).

This sequence belongs to the azoreductase type 1 family. In terms of assembly, homodimer. It depends on FMN as a cofactor.

The catalysed reaction is 2 a quinone + NADH + H(+) = 2 a 1,4-benzosemiquinone + NAD(+). It catalyses the reaction N,N-dimethyl-1,4-phenylenediamine + anthranilate + 2 NAD(+) = 2-(4-dimethylaminophenyl)diazenylbenzoate + 2 NADH + 2 H(+). Its function is as follows. Quinone reductase that provides resistance to thiol-specific stress caused by electrophilic quinones. In terms of biological role, also exhibits azoreductase activity. Catalyzes the reductive cleavage of the azo bond in aromatic azo compounds to the corresponding amines. The chain is FMN-dependent NADH:quinone oxidoreductase from Bordetella petrii (strain ATCC BAA-461 / DSM 12804 / CCUG 43448).